Here is a 242-residue protein sequence, read N- to C-terminus: Small ribosomal subunit protein uS2 (242 aa).

It belongs to the universal ribosomal protein uS2 family.

This Shewanella loihica (strain ATCC BAA-1088 / PV-4) protein is Small ribosomal subunit protein uS2.